Consider the following 711-residue polypeptide: MLNPIVRKFQYGQHTVTLETGMMARQATAAVMVSMDDTAVFVTVVGQKKAKPGQDFFPLTVNYQERTYAAGRIPGSFFRREGRPSEGETLIARLIDRPVRPLFPEGFVNEVQVIATVVSVNPQVNPDIVAMIGASAALSLSGIPFNGPIGAARVGYINDQYVLNPTQDELKESKLDLVVAGTEAAVLMVESEAELLSEDTMLGAVVFGHEQQQIVIQNINDLVKEAGKPRWDWQQEAVNEALNARVAALAEARLSDAYRITDKQERYAQVDVIKSETIAALVAEDETLDENELGEILHAIEKNVVRSRVLAGEPRIDGREKDMIRGLDVRTGVLPRTHGSALFTRGETQALVTATLGTARDAQVLDELMGERTDSFLFHYNFPPYSVGETGMVGSPKRREIGHGRLAKRGVLAVMPEMDKFPYTVRVVSEITESNGSSSMASVCGASLALMDAGVPIKAAVAGIAMGLVKEGDNFVVLSDILGDEDHLGDMDFKVAGSRDGISALQMDIKIEGITKEIMQVALNQAKGARLHILGVMEQAINAPRGDISQFAPRIHTIKINPDKIKDVIGKGGSVIRALTEETGTTIEIEDDGTVKIAATDGEKAKHAIRRIEEITAEIEVGRIYNGKVTRIVDFGAFVAIGGGKEGLVHISQIADKRVEKVTDYLQMGQEVPVKVLEVDRQGRVRLSIKEATEQSQPAAAPEAPAAEQGE.

Mg(2+) is bound by residues Asp-486 and Asp-492. The 60-residue stretch at 553 to 612 (PRIHTIKINPDKIKDVIGKGGSVIRALTEETGTTIEIEDDGTVKIAATDGEKAKHAIRRI) folds into the KH domain. The 69-residue stretch at 622–690 (GRIYNGKVTR…RQGRVRLSIK (69 aa)) folds into the S1 motif domain. The segment at 690 to 711 (KEATEQSQPAAAPEAPAAEQGE) is disordered. A compositionally biased stretch (low complexity) spans 694 to 711 (EQSQPAAAPEAPAAEQGE).

The protein belongs to the polyribonucleotide nucleotidyltransferase family. As to quaternary structure, component of the RNA degradosome, which is a multiprotein complex involved in RNA processing and mRNA degradation. It depends on Mg(2+) as a cofactor.

Its subcellular location is the cytoplasm. It catalyses the reaction RNA(n+1) + phosphate = RNA(n) + a ribonucleoside 5'-diphosphate. Its function is as follows. Involved in mRNA degradation. Catalyzes the phosphorolysis of single-stranded polyribonucleotides processively in the 3'- to 5'-direction. This is Polyribonucleotide nucleotidyltransferase from Citrobacter koseri (strain ATCC BAA-895 / CDC 4225-83 / SGSC4696).